The sequence spans 157 residues: MFDILMYLFENYVHSEVEFLVDEDELTQELTRAGFHQSEIIKALSWLENLAELQEGDKPYLCNHAQHSFRIYTQDEMDKLDVECRGFILFLEQIEVLNVVTREMVIDRIMELDESALILEDLKWVVLMVLFNAPGNESAYEQMEDLIFEQPDGRLHS.

It belongs to the Smg family.

The polypeptide is Protein Smg homolog (Shewanella woodyi (strain ATCC 51908 / MS32)).